Consider the following 236-residue polypeptide: ATP synthase subunit a (236 aa).

5 helical membrane-spanning segments follow: residues serine 18–threonine 38, glycine 79–valine 99, aspartate 112–valine 132, isoleucine 174–glycine 194, and tryptophan 205–tyrosine 227.

The protein belongs to the ATPase A chain family. In terms of assembly, F-type ATPases have 2 components, CF(1) - the catalytic core - and CF(0) - the membrane proton channel. CF(1) has five subunits: alpha(3), beta(3), gamma(1), delta(1), epsilon(1). CF(0) has three main subunits: a(1), b(2) and c(9-12). The alpha and beta chains form an alternating ring which encloses part of the gamma chain. CF(1) is attached to CF(0) by a central stalk formed by the gamma and epsilon chains, while a peripheral stalk is formed by the delta and b chains.

The protein resides in the cell membrane. In terms of biological role, key component of the proton channel; it plays a direct role in the translocation of protons across the membrane. This chain is ATP synthase subunit a, found in Lysinibacillus sphaericus (strain C3-41).